Here is a 244-residue protein sequence, read N- to C-terminus: Pyridoxine 5'-phosphate synthase (244 aa).

Position 12 (Asn12) interacts with 3-amino-2-oxopropyl phosphate. Asp14 to His15 is a 1-deoxy-D-xylulose 5-phosphate binding site. A 3-amino-2-oxopropyl phosphate-binding site is contributed by Arg23. Residue His48 is the Proton acceptor of the active site. Residues Arg50 and His55 each contribute to the 1-deoxy-D-xylulose 5-phosphate site. Glu75 acts as the Proton acceptor in catalysis. Thr105 is a 1-deoxy-D-xylulose 5-phosphate binding site. His196 functions as the Proton donor in the catalytic mechanism. Residues Gly197 and Gly218–His219 contribute to the 3-amino-2-oxopropyl phosphate site.

This sequence belongs to the PNP synthase family. In terms of assembly, homooctamer; tetramer of dimers.

The protein resides in the cytoplasm. The catalysed reaction is 3-amino-2-oxopropyl phosphate + 1-deoxy-D-xylulose 5-phosphate = pyridoxine 5'-phosphate + phosphate + 2 H2O + H(+). It functions in the pathway cofactor biosynthesis; pyridoxine 5'-phosphate biosynthesis; pyridoxine 5'-phosphate from D-erythrose 4-phosphate: step 5/5. Its function is as follows. Catalyzes the complicated ring closure reaction between the two acyclic compounds 1-deoxy-D-xylulose-5-phosphate (DXP) and 3-amino-2-oxopropyl phosphate (1-amino-acetone-3-phosphate or AAP) to form pyridoxine 5'-phosphate (PNP) and inorganic phosphate. In Alcanivorax borkumensis (strain ATCC 700651 / DSM 11573 / NCIMB 13689 / SK2), this protein is Pyridoxine 5'-phosphate synthase.